The following is a 482-amino-acid chain: Protein farnesyltransferase subunit beta (482 aa).

4 PFTB repeats span residues 131–172 (ESNA…VTLG), 182–223 (REKM…SILN), 230–271 (TQGL…ILIN), and 278–319 (LDSL…VLLQ). Residues 256-259 (HGGY) and 298-301 (RTNK) each bind (2E,6E)-farnesyl diphosphate. Zn(2+) is bound by residues aspartate 304 and cysteine 306. (2E,6E)-farnesyl diphosphate is bound at residue 307 to 310 (YTFW). A disordered region spans residues 329–372 (VHGSSHISEGTNEEHHAHDEDDLEDSDDDDDSDEDNDEDSVNGH). Positions 348-368 (EDDLEDSDDDDDSDEDNDEDS) are enriched in acidic residues. The stretch at 391–433 (SLGLQRYVLLCSKIPDGGFRDKPRKPRDFYHTCYCLSGLSVAQ) is one PFTB 5 repeat. Histidine 421 serves as a coordination point for Zn(2+).

The protein belongs to the protein prenyltransferase subunit beta family. As to quaternary structure, heterodimer of FTA and FTB (farnesyltransferase). Heterodimer of an alpha and a beta subunit. Zn(2+) is required as a cofactor.

It carries out the reaction L-cysteinyl-[protein] + (2E,6E)-farnesyl diphosphate = S-(2E,6E)-farnesyl-L-cysteinyl-[protein] + diphosphate. Functionally, catalyzes the transfer of a farnesyl moiety from farnesyl diphosphate to a cysteine at the fourth position from the C-terminus of several proteins having the C-terminal sequence Cys-aliphatic-aliphatic-X (CaaX). The beta subunit is responsible for peptide-binding. Acts as an abscisic acid (ABA) negative regulator by mediating ASG2 farnesylation and consequently monitoring its subcellular localization. Involved in responses to salt (NaCl) and osmotic (e.g. in response to mannitol and PEG) stresses. The polypeptide is Protein farnesyltransferase subunit beta (FTB) (Arabidopsis thaliana (Mouse-ear cress)).